The primary structure comprises 174 residues: MSESAIVGGGCFWCLEAIFQRVKGVHRVTSGYAGCRRQNPTYEQVCTGTTKCAEVVKIDFDPHIINYEELLHIFFAVHDPTQLNRQGADIGTQYRSVIFPLNEEQKAIAQKVIQKLNPYFENKIVTTIENPGTFYEAESYHQNYYNTHPDQGYCQVVIAPKLKKFMNMFQEYLQ.

The active site involves cysteine 11.

Belongs to the MsrA Met sulfoxide reductase family.

The enzyme catalyses L-methionyl-[protein] + [thioredoxin]-disulfide + H2O = L-methionyl-(S)-S-oxide-[protein] + [thioredoxin]-dithiol. It catalyses the reaction [thioredoxin]-disulfide + L-methionine + H2O = L-methionine (S)-S-oxide + [thioredoxin]-dithiol. Its function is as follows. Has an important function as a repair enzyme for proteins that have been inactivated by oxidation. Catalyzes the reversible oxidation-reduction of methionine sulfoxide in proteins to methionine. The polypeptide is Peptide methionine sulfoxide reductase MsrA (Nitratiruptor sp. (strain SB155-2)).